Here is a 414-residue protein sequence, read N- to C-terminus: MIAEIVAIGSELLTPFRQDTNSLYLTQRLNEMGVEVAFKNIVGDSRANLASVARTAIARSHIVLFMGGLGPTEDDLTREAVADALGLRLKRNPDLVAELYKRFASRRVTMPDNNMRQADVIAGAEIIQNDNGSAPGQFIEGEQDGQPRYIFLLPGPPHELKAMWNEKCHHTLRDRLPRAYIATRELRISSLGESTVDARVAPIYTKYKNVDTTILAKPGEVSLHLKSRAATMEQAQAAVDQLAAELEDELDDAVFSTNGESLEQIVGYYLQMRSGTISVAESCTGGLLAERLTNVSGSSRYFIGGVVVYSNQMKTLLADVPPLMIEEHGAVSRQVAVALAENFREITNSTIGVGITGIAGPTGGTEDKPVGLVYIAVADELGTDVVERRFPGDRERIRWWSSQVALDMVRKKLI.

Belongs to the CinA family.

This chain is CinA-like protein, found in Koribacter versatilis (strain Ellin345).